The sequence spans 55 residues: MPQLELISWFFNFLLAWFFLFIVVTILLKINFPSTNYITVTHPQKLNIFNNWLWT.

The chain crosses the membrane as a helical span at residues 7-28; sequence ISWFFNFLLAWFFLFIVVTILL.

It belongs to the ATPase protein 8 family. F-type ATPases have 2 components, CF(1) - the catalytic core - and CF(0) - the membrane proton channel.

It localises to the mitochondrion membrane. Its function is as follows. Mitochondrial membrane ATP synthase (F(1)F(0) ATP synthase or Complex V) produces ATP from ADP in the presence of a proton gradient across the membrane which is generated by electron transport complexes of the respiratory chain. F-type ATPases consist of two structural domains, F(1) - containing the extramembraneous catalytic core and F(0) - containing the membrane proton channel, linked together by a central stalk and a peripheral stalk. During catalysis, ATP synthesis in the catalytic domain of F(1) is coupled via a rotary mechanism of the central stalk subunits to proton translocation. Part of the complex F(0) domain. Minor subunit located with subunit a in the membrane. This chain is ATP synthase protein 8 (MT-ATP8), found in Pisaster ochraceus (Ochre sea star).